A 45-amino-acid polypeptide reads, in one-letter code: Photosystem II reaction center protein K (45 aa).

A propeptide spanning residues 1 to 8 (METIYLLA) is cleaved from the precursor. A helical transmembrane segment spans residues 16-40 (IFDPLVDVLPVIPLFFLALAFVWQA).

The protein belongs to the PsbK family. PSII is composed of 1 copy each of membrane proteins PsbA, PsbB, PsbC, PsbD, PsbE, PsbF, PsbH, PsbI, PsbJ, PsbK, PsbL, PsbM, PsbT, PsbX, PsbY, PsbZ, Psb30/Ycf12, peripheral proteins PsbO, CyanoQ (PsbQ), PsbU, PsbV and a large number of cofactors. It forms dimeric complexes.

It is found in the cellular thylakoid membrane. In terms of biological role, one of the components of the core complex of photosystem II (PSII). PSII is a light-driven water:plastoquinone oxidoreductase that uses light energy to abstract electrons from H(2)O, generating O(2) and a proton gradient subsequently used for ATP formation. It consists of a core antenna complex that captures photons, and an electron transfer chain that converts photonic excitation into a charge separation. In Synechocystis sp. (strain ATCC 27184 / PCC 6803 / Kazusa), this protein is Photosystem II reaction center protein K.